A 693-amino-acid chain; its full sequence is Kinesin-like protein KIFC1 (693 aa).

Disordered regions lie at residues 1–24 and 48–156; these read MRGR…VRTT and VKSS…KRPA. Low complexity-rich tracts occupy residues 49–59 and 127–138; these read KSSSRLPLPGS and QKPAPAAPAQKP. Phosphoserine is present on residues serine 52 and serine 59. A coiled-coil region spans residues 165–334; that stretch reads DLHEELKQYR…QELKGNIRVF (170 aa). The Kinesin motor domain occupies 330-683; the sequence is NIRVFCRVRP…LRFASKVNQC (354 aa). Threonine 379 is subject to Phosphothreonine. 430–437 is an ATP binding site; the sequence is GQTGSGKT.

It belongs to the TRAFAC class myosin-kinesin ATPase superfamily. Kinesin family. NCD subfamily. Binds NUBP1 and NUBP2. Interacts with PPP1R42.

The protein localises to the nucleus. It localises to the cytoplasm. Its subcellular location is the cytoskeleton. It is found in the microtubule organizing center. The protein resides in the centrosome. The protein localises to the spindle. It localises to the early endosome. Its function is as follows. Minus end-directed microtubule-dependent motor required for bipolar spindle formation. May contribute to movement of early endocytic vesicles. Regulates cilium formation and structure. This is Kinesin-like protein KIFC1 from Rattus norvegicus (Rat).